Here is a 240-residue protein sequence, read N- to C-terminus: LexA repressor (240 aa).

Residues phenylalanine 26 to threonine 46 constitute a DNA-binding region (H-T-H motif). Residues glutamine 78 to serine 113 are disordered. Catalysis depends on for autocatalytic cleavage activity residues serine 160 and lysine 198.

The protein belongs to the peptidase S24 family. As to quaternary structure, homodimer.

The catalysed reaction is Hydrolysis of Ala-|-Gly bond in repressor LexA.. In terms of biological role, represses a number of genes involved in the response to DNA damage (SOS response), including recA and lexA. In the presence of single-stranded DNA, RecA interacts with LexA causing an autocatalytic cleavage which disrupts the DNA-binding part of LexA, leading to derepression of the SOS regulon and eventually DNA repair. This chain is LexA repressor, found in Rhizobium rhizogenes (strain K84 / ATCC BAA-868) (Agrobacterium radiobacter).